The following is a 268-amino-acid chain: GTP cyclohydrolase FolE2 (268 aa).

It belongs to the GTP cyclohydrolase IV family.

It carries out the reaction GTP + H2O = 7,8-dihydroneopterin 3'-triphosphate + formate + H(+). Its pathway is cofactor biosynthesis; 7,8-dihydroneopterin triphosphate biosynthesis; 7,8-dihydroneopterin triphosphate from GTP: step 1/1. Functionally, converts GTP to 7,8-dihydroneopterin triphosphate. The polypeptide is GTP cyclohydrolase FolE2 (Paraburkholderia phymatum (strain DSM 17167 / CIP 108236 / LMG 21445 / STM815) (Burkholderia phymatum)).